A 643-amino-acid chain; its full sequence is Protein tramtrack, beta isoform (643 aa).

In terms of domain architecture, BTB spans 33 to 98 (TDVTLAVEGQ…MYRGEVSVDQ (66 aa)). 2 disordered regions span residues 118–148 (EVND…PQLQ) and 171–300 (ANAG…GLDT). A Glycyl lysine isopeptide (Lys-Gly) (interchain with G-Cter in ubiquitin) cross-link involves residue Lys-123. Over residues 125–145 (SPAAAAAGAGATGSESTATTP) the composition is skewed to low complexity. The segment covering 176–187 (TPTLPVQPSLLS) has biased composition (polar residues). Residues 192 to 201 (PKRKRGRPRK) show a composition bias toward basic residues. Residue Lys-201 forms a Glycyl lysine isopeptide (Lys-Gly) (interchain with G-Cter in ubiquitin) linkage. The segment covering 254 to 285 (HTDDLNESRDSLPSKRSKNSKDHRVVSHHEDN) has biased composition (basic and acidic residues). Glycyl lysine isopeptide (Lys-Gly) (interchain with G-Cter in ubiquitin) cross-links involve residues Lys-355, Lys-397, Lys-418, Lys-457, Lys-478, and Lys-480. 2 C2H2-type zinc fingers span residues 508–531 (YRCK…VTSH) and 538–561 (YPCP…KIIH). Lys-545 participates in a covalent cross-link: Glycyl lysine isopeptide (Lys-Gly) (interchain with G-Cter in ubiquitin). The tract at residues 584-643 (GVSGASTPPPPDLSGQNSNQSLPATSNALSTSSSSSTSSSSGSLGPLTTSAPPAPAAAAQ) is disordered. Positions 604 to 643 (SLPATSNALSTSSSSSTSSSSGSLGPLTTSAPPAPAAAAQ) are enriched in low complexity.

In terms of assembly, can form homodimers. Interacts with Trl in vivo via the BTB domain. Interacts with phyl. Interacts with Usp47. In terms of processing, polyubiquitinated by sina. Polyubiquitin linkage is mainly through 'Lys-48', but linkage through 'Lys-63' also occurs. Deubiquitination by Usp47 leads to its stabilization.

Its subcellular location is the nucleus. Binds to a number of sites in the transcriptional regulatory region of ftz. Isoform beta is required to repress inappropriate segmentation gene transcription and repress genes incompatible with development of photoreceptor cell fates. Probable repressor of the transcription of the segmentation genes ftz, eve, h, odd, run, and en. Inhibits Trl-dependent activation of eve. May bind to the region AGGGC/TGG. Degradation of ttk is directed by binding of sinah or sina, via the adapter molecule phyl which binds to the BTB domain of ttk. A second method of degradation exists that is phyl-independent, this is mediated by recognition of motifs in the C-terminus of ttk. The protein is Protein tramtrack, beta isoform (ttk) of Drosophila melanogaster (Fruit fly).